Here is a 148-residue protein sequence, read N- to C-terminus: Calmodulin-related protein 97A (148 aa).

EF-hand domains follow at residues 7–42, 43–78, 80–115, and 116–148; these read EQIA…LGQN, PTEA…QMRE, DTEE…LGEK, and VTDE…ISQK. Ca(2+)-binding residues include Asp20, Thr24, Lys26, Glu31, Asn58, Asn60, Gln62, Glu67, Asp93, Asp95, Asp97, Glu104, Asp129, Asp131, Asp133, Met135, and Glu140.

It belongs to the calmodulin family.

May be involved in calcium-mediated signal transduction. The protein is Calmodulin-related protein 97A (Acam) of Drosophila melanogaster (Fruit fly).